Consider the following 408-residue polypeptide: Aminoacylase-1B (408 aa).

Zn(2+) is bound at residue histidine 80. Aspartate 82 is an active-site residue. A Zn(2+)-binding site is contributed by aspartate 113. The Proton acceptor role is filled by glutamate 147. Residues glutamate 148, glutamate 175, and histidine 373 each coordinate Zn(2+). Serine 408 carries the phosphoserine modification.

It belongs to the peptidase M20A family. As to quaternary structure, homodimer. It depends on Zn(2+) as a cofactor. As to expression, expressed in kidney.

The protein resides in the cytoplasm. It carries out the reaction an N-acyl-L-amino acid + H2O = an L-alpha-amino acid + a carboxylate. The catalysed reaction is an N-acetyl-L-cysteine-S-conjugate + H2O = an S-substituted L-cysteine + acetate. Functionally, involved in the hydrolysis of N-acylated or N-acetylated amino acids (except L-aspartate). This is Aminoacylase-1B (Acy1b) from Rattus norvegicus (Rat).